The primary structure comprises 591 residues: Aspartate--tRNA(Asp/Asn) ligase (591 aa).

Glu-174 is a binding site for L-aspartate. Residues 198–201 (QLFK) form an aspartate region. Position 220 (Arg-220) interacts with L-aspartate. ATP contacts are provided by residues 220–222 (RDE) and Gln-229. His-450 lines the L-aspartate pocket. Residue Glu-483 coordinates ATP. Arg-490 is an L-aspartate binding site. Position 535 to 538 (535 to 538 (GLDR)) interacts with ATP.

The protein belongs to the class-II aminoacyl-tRNA synthetase family. Type 1 subfamily. Homodimer.

Its subcellular location is the cytoplasm. The enzyme catalyses tRNA(Asx) + L-aspartate + ATP = L-aspartyl-tRNA(Asx) + AMP + diphosphate. Functionally, aspartyl-tRNA synthetase with relaxed tRNA specificity since it is able to aspartylate not only its cognate tRNA(Asp) but also tRNA(Asn). Reaction proceeds in two steps: L-aspartate is first activated by ATP to form Asp-AMP and then transferred to the acceptor end of tRNA(Asp/Asn). In Ectopseudomonas mendocina (strain ymp) (Pseudomonas mendocina), this protein is Aspartate--tRNA(Asp/Asn) ligase.